Here is a 638-residue protein sequence, read N- to C-terminus: MEHIQGAWKTLSNGFGFKESVFEGSSCMSPTIVHQFGYQRRASDDGKLSDTSKTSSTMRVYLPNKQRTVVNVRSGMSLHDCLMKSLKVRGLQPECCAVFRLIQDPKGKLRLDWNTDAMSLVGAELQVDFLDHVPLTTHNFVRKTFLKLAFCDICQKFLLNAFRCQTCGYKFHEHCSTKVPTMCVDWSNIRQLLLFPNPNNIEGGSHTLPSLTMRRIGESVRIPVSSQQRYSTPHPFSFSTPSPVSECSLSQRQRSTSTPNVHMVSTTMAVDSRVIEDALRSHSESGSPNNLSPTGWSNAKAPAPTHREKAASSTGQEKNKIRARGQRDSSYYWEIIASEVMLSSRIGSGSFGTVYKGKWHGDVAVKILKVTDPTPEQLQAFRNEVAVLRKTRHVNILLFMGYMTKDNLAIVTQWCEGSSLYYHLHVLDTKFQMFQLIDIARQTAQGMDYLHAKNIIHRDMKSNNIFLHEGLTVKIGDFGLATVKTRWSGSQQVEQLTGSILWMAPEVIRMQDNNPFSFQSDVYSYGIVLYELMTGELPYSHIRDRDQIIFLVGRGGVVPDLSKLYKNCPKAMKRLVADSIKKLRDERPLFPQILSSIELLQHSLPKINRSALEPSLHRAAHTEDISSCALTSTRLPVF.

S43 carries the post-translational modification Phosphoserine. The RBD domain maps to S56–L130. Residues T137–C183 form a Phorbol-ester/DAG-type zinc finger. 8 residues coordinate Zn(2+): H138, C151, C154, C164, C167, H172, C175, and C183. Residue S257 is modified to Phosphoserine. T266 is modified (phosphothreonine; by autocatalysis). The segment at L279–A323 is disordered. Over residues E284–S297 the composition is skewed to polar residues. Position 329 is a phosphoserine (S329). The region spanning V340–L600 is the Protein kinase domain. ATP contacts are provided by residues I346–V354 and K366. The active-site Proton acceptor is the D459. S490 carries the phosphoserine modification.

This sequence belongs to the protein kinase superfamily. TKL Ser/Thr protein kinase family. RAF subfamily. It depends on Zn(2+) as a cofactor. Phosphorylation at Ser-257 inactivates kinase activity. Dephosphorylation of Ser-257 by a complex containing protein phosphatase 1 relieves inactivation, leading to stimulate RAF1 activity.

It is found in the cytoplasm. The protein resides in the cell membrane. The catalysed reaction is L-seryl-[protein] + ATP = O-phospho-L-seryl-[protein] + ADP + H(+). The enzyme catalyses L-threonyl-[protein] + ATP = O-phospho-L-threonyl-[protein] + ADP + H(+). In terms of biological role, serine/threonine-protein kinase that acts as a regulatory link between the membrane-associated Ras GTPases and the MAPK/ERK cascade, and this critical regulatory link functions as a switch determining cell fate decisions. RAF1 activation initiates a mitogen-activated protein kinase (MAPK) cascade that comprises a sequential phosphorylation of the dual-specific MAPK kinases (MAP2K1/MEK1 and MAP2K2/MEK2) and the extracellular signal-regulated kinases (MAPK3/ERK1 and MAPK1/ERK2). In Xenopus laevis (African clawed frog), this protein is RAF proto-oncogene serine/threonine-protein kinase (raf1).